The following is a 406-amino-acid chain: Succinylornithine transaminase (406 aa).

At Lys-252 the chain carries N6-(pyridoxal phosphate)lysine.

The protein belongs to the class-III pyridoxal-phosphate-dependent aminotransferase family. AstC subfamily. It depends on pyridoxal 5'-phosphate as a cofactor.

The enzyme catalyses N(2)-succinyl-L-ornithine + 2-oxoglutarate = N-succinyl-L-glutamate 5-semialdehyde + L-glutamate. Its pathway is amino-acid degradation; L-arginine degradation via AST pathway; L-glutamate and succinate from L-arginine: step 3/5. Its function is as follows. Catalyzes the transamination of N(2)-succinylornithine and alpha-ketoglutarate into N(2)-succinylglutamate semialdehyde and glutamate. Can also act as an acetylornithine aminotransferase. The sequence is that of Succinylornithine transaminase from Escherichia coli (strain SMS-3-5 / SECEC).